The chain runs to 585 residues: Cytidine monophosphate-N-acetylneuraminic acid hydroxylase (585 aa).

Residues 9 to 107 (LSPVEVANLK…VEMDENNRLL (99 aa)) form the Rieske domain. [2Fe-2S] cluster-binding residues include C49, H51, C70, and H73.

This sequence belongs to the CMP-Neu5Ac hydroxylase family. Requires [2Fe-2S] cluster as cofactor.

It is found in the cytoplasm. The catalysed reaction is CMP-N-acetyl-beta-neuraminate + 2 Fe(II)-[cytochrome b5] + O2 + 2 H(+) = CMP-N-glycoloyl-beta-neuraminate + 2 Fe(III)-[cytochrome b5] + H2O. It participates in amino-sugar metabolism; N-acetylneuraminate metabolism. Its function is as follows. Sialic acids are components of carbohydrate chains of glycoconjugates and are involved in cell-cell recognition and cell-pathogen interactions. Catalyzes the conversion of CMP-N-acetylneuraminic acid (CMP-Neu5Ac) into its hydroxylated derivative CMP-N-glycolylneuraminic acid (CMP-Neu5Gc), a sialic acid abundantly expressed at the surface of many cells. This chain is Cytidine monophosphate-N-acetylneuraminic acid hydroxylase (CMAH), found in Pongo pygmaeus (Bornean orangutan).